We begin with the raw amino-acid sequence, 284 residues long: Cell division protein FtsQ (284 aa).

Residues 1 to 31 (MAQLPASMRRKRAAITSIHDKPPTRKQKLAN) lie on the Cytoplasmic side of the membrane. The helical transmembrane segment at 32-52 (AGGWVLLVIAFVVLAVGIYGL) threads the bilayer. Residues 53-284 (YKVITDATVA…SIAGGTKAKP (232 aa)) lie on the Periplasmic side of the membrane. One can recognise a POTRA domain in the interval 59–128 (ATVAKLEVVG…NGIRVRVMPR (70 aa)).

This sequence belongs to the FtsQ/DivIB family. FtsQ subfamily. In terms of assembly, part of a complex composed of FtsB, FtsL and FtsQ.

It localises to the cell inner membrane. Essential cell division protein. May link together the upstream cell division proteins, which are predominantly cytoplasmic, with the downstream cell division proteins, which are predominantly periplasmic. May control correct divisome assembly. This Acinetobacter oleivorans (strain JCM 16667 / KCTC 23045 / DR1) protein is Cell division protein FtsQ.